We begin with the raw amino-acid sequence, 236 residues long: Leucyl/phenylalanyl-tRNA--protein transferase (236 aa).

It belongs to the L/F-transferase family.

It is found in the cytoplasm. The enzyme catalyses N-terminal L-lysyl-[protein] + L-leucyl-tRNA(Leu) = N-terminal L-leucyl-L-lysyl-[protein] + tRNA(Leu) + H(+). It catalyses the reaction N-terminal L-arginyl-[protein] + L-leucyl-tRNA(Leu) = N-terminal L-leucyl-L-arginyl-[protein] + tRNA(Leu) + H(+). It carries out the reaction L-phenylalanyl-tRNA(Phe) + an N-terminal L-alpha-aminoacyl-[protein] = an N-terminal L-phenylalanyl-L-alpha-aminoacyl-[protein] + tRNA(Phe). Functionally, functions in the N-end rule pathway of protein degradation where it conjugates Leu, Phe and, less efficiently, Met from aminoacyl-tRNAs to the N-termini of proteins containing an N-terminal arginine or lysine. The sequence is that of Leucyl/phenylalanyl-tRNA--protein transferase from Aliivibrio salmonicida (strain LFI1238) (Vibrio salmonicida (strain LFI1238)).